The chain runs to 285 residues: Probable enoyl-CoA hydratase echA12 (285 aa).

This sequence belongs to the enoyl-CoA hydratase/isomerase family.

The enzyme catalyses a (3S)-3-hydroxyacyl-CoA = a (2E)-enoyl-CoA + H2O. The catalysed reaction is a 4-saturated-(3S)-3-hydroxyacyl-CoA = a (3E)-enoyl-CoA + H2O. Functionally, could possibly oxidize fatty acids using specific components. This chain is Probable enoyl-CoA hydratase echA12 (echA12), found in Mycobacterium tuberculosis (strain CDC 1551 / Oshkosh).